Consider the following 296-residue polypeptide: Light-inducible protein CPRF3 (296 aa).

Disordered regions lie at residues 1–27, 98–165, and 190–223; these read MSDGEEGTPMKHPKPASSVEEAPITTT, PNLA…GSLE, and RVNDERELKRQRRKQSNRESARRSRLRKQAKSDE. Basic and acidic residues predominate over residues 107-117; sequence VGRKISDEKGR. The span at 145–156 shows a compositional bias: low complexity; sequence SSSDNDCPSLSS. The region spanning 196–259 is the bZIP domain; the sequence is ELKRQRRKQS…AEVTSENHSI (64 aa). The tract at residues 198-220 is basic motif; that stretch reads KRQRRKQSNRESARRSRLRKQAK. The interval 224 to 245 is leucine-zipper; it reads LQERLDNLSKENRILRKNLQRI.

It belongs to the bZIP family. As to quaternary structure, binds DNA as a dimer.

It is found in the nucleus. Functionally, binds to the G-box-like motif (5'-ACGTGGC-3') of the chalcone synthase (CHS) gene promoter. G-box and G-box-like motifs are defined in promoters of certain plant genes which are regulated by such diverse stimuli as light-induction or hormone control. The protein is Light-inducible protein CPRF3 (CPRF3) of Petroselinum crispum (Parsley).